The sequence spans 181 residues: Adenine phosphoribosyltransferase 1 (181 aa).

This sequence belongs to the purine/pyrimidine phosphoribosyltransferase family. In terms of assembly, homodimer.

The protein localises to the cytoplasm. It carries out the reaction AMP + diphosphate = 5-phospho-alpha-D-ribose 1-diphosphate + adenine. It participates in purine metabolism; AMP biosynthesis via salvage pathway; AMP from adenine: step 1/1. Functionally, catalyzes a salvage reaction resulting in the formation of AMP, that is energically less costly than de novo synthesis. The polypeptide is Adenine phosphoribosyltransferase 1 (APT1) (Triticum aestivum (Wheat)).